Here is a 593-residue protein sequence, read N- to C-terminus: ATPase family AAA domain-containing protein 3-B (593 aa).

3 disordered regions span residues Met1–Ser64, Glu109–Gln129, and Gln145–Ala164. Over Met1–Lys242 the chain is Mitochondrial intermembrane. Positions Pro12 to Pro27 are enriched in pro residues. 4 stretches are compositionally biased toward basic and acidic residues: residues Gly33–Ser44, Arg53–Ser64, Glu109–Gln121, and Glu150–Ala164. Residues Leu51–Arg215 are a coiled coil. The helical transmembrane segment at Val243–Ala260 threads the bilayer. Residues Lys261–Val593 lie on the Mitochondrial matrix side of the membrane. Gly348–Thr355 is an ATP binding site. Positions Ala570–Gly580 are enriched in basic and acidic residues. The segment at Ala570–Val593 is disordered.

It belongs to the AAA ATPase family. Can form homooligomers. Homodimer formation at the N-terminus may be regulated by ATP and is required for the interaction with the inner surface of the mitochondrial outer membrane and correct mitochondrial homeostasis.

It is found in the mitochondrion inner membrane. Its subcellular location is the mitochondrion matrix. The protein localises to the mitochondrion nucleoid. The enzyme catalyses ATP + H2O = ADP + phosphate + H(+). Its function is as follows. Essential for mitochondrial network organization, mitochondrial metabolism and cell growth at organism and cellular level. May play an important role in mitochondrial protein synthesis. May also participate in mitochondrial DNA replication. May bind to mitochondrial DNA D-loops and contribute to nucleoid stability. Required for enhanced channeling of cholesterol for hormone-dependent steroidogenesis. Involved in mitochondrial-mediated antiviral innate immunity. Required to protect mitochondria from the PERK-mediated unfolded protein response: specifically inhibits the activity of EIF2AK3/PERK at mitochondria-endoplasmic reticulum contact sites, thereby providing a safe haven for mitochondrial protein translation during endoplasmic reticulum stress. Ability to inhibit EIF2AK3/PERK is independent of its ATPase activity. Also involved in the mitochondrial DNA damage response by promoting signaling between damaged genomes and the mitochondrial membrane, leading to activation of the integrated stress response (ISR). This Xenopus laevis (African clawed frog) protein is ATPase family AAA domain-containing protein 3-B (atad3-b).